The sequence spans 278 residues: Neuronal membrane glycoprotein M6-a (278 aa).

At Met1 the chain carries N-acetylmethionine. Topologically, residues 1 to 22 (MEENMEEGQTQKGCFECCIKCL) are cytoplasmic. The chain crosses the membrane as a helical span at residues 23–43 (GGIPYASLIATILLYAGVALF). The Extracellular segment spans residues 44 to 84 (CGCGHEALSGTVNILQTYFEMARTAGDTLDVFTMIDIFKYV). The chain crosses the membrane as a helical span at residues 85-105 (IYGIAAAFFVYGILLMVEGFF). The Cytoplasmic segment spans residues 106-127 (TTGAIKDLYGDFKITTCGRCVS). Residues 128–148 (AWFIMLTYLFMLAWLGVTAFT) form a helical membrane-spanning segment. Residues 149–213 (SLPVYMYFNV…STELNMTFHL (65 aa)) are Extracellular-facing. Asn164 is a glycosylation site (N-linked (GlcNAc...) asparagine). Cysteines 174 and 192 form a disulfide. Residue Asn208 is glycosylated (N-linked (GlcNAc...) asparagine). Residues 214–234 (FIVALAGAGAAVIAMVHYLMV) form a helical membrane-spanning segment. Topologically, residues 235-278 (LSANWAYVKDACRMQKYEDIKSKEEQELHDIHSTRSKERLNAYT) are cytoplasmic. Ser256 is subject to Phosphoserine. Thr278 is subject to Phosphothreonine.

It belongs to the myelin proteolipid protein family. As to quaternary structure, interacts with OPRM1. Interacts with palmitoyltransferase ZDHHC17/HIP14; the interaction leads to palmitoylation of GPM6A. Post-translationally, N-glycosylated. Palmitoylated by ZDHHC17/HIP14. Expressed in hippocampus (at protein level). Isoform 1 is the predominant isoform expressed in brain, specifically in hippocampus. Isoform 2 is expressed at low levels in brain and kidney.

It localises to the cell membrane. It is found in the cell projection. The protein resides in the axon. The protein localises to the growth cone. Its subcellular location is the dendritic spine. It localises to the filopodium. It is found in the neuron projection. Its function is as follows. Involved in neuronal differentiation, including differentiation and migration of neuronal stem cells. Plays a role in neuronal plasticity and is involved in neurite and filopodia outgrowth, filopodia motility and probably synapse formation. Gpm6a-induced filopodia formation involves mitogen-activated protein kinase (MAPK) and Src signaling pathways. May be involved in neuronal NGF-dependent Ca(2+) influx. May be involved in regulation of endocytosis and intracellular trafficking of G-protein-coupled receptors (GPCRs); enhances internalization and recycling of mu-type opioid receptor. This is Neuronal membrane glycoprotein M6-a (Gpm6a) from Rattus norvegicus (Rat).